We begin with the raw amino-acid sequence, 873 residues long: Bifunctional uridylyltransferase/uridylyl-removing enzyme (873 aa).

Residues 1-332 (MKYLSPLSLS…HQGEQDDAII (332 aa)) are uridylyltransferase. A uridylyl-removing region spans residues 333–692 (IDDDFQRRGR…ISKNASRGGT (360 aa)). The 123-residue stretch at 451–573 (VDEHSIRLLK…VRDEERLDYL (123 aa)) folds into the HD domain. ACT domains follow at residues 693-777 (EIFV…RPPR) and 800-873 (LMEF…RLSS).

It belongs to the GlnD family. The cofactor is Mg(2+).

The catalysed reaction is [protein-PII]-L-tyrosine + UTP = [protein-PII]-uridylyl-L-tyrosine + diphosphate. It catalyses the reaction [protein-PII]-uridylyl-L-tyrosine + H2O = [protein-PII]-L-tyrosine + UMP + H(+). Its activity is regulated as follows. Uridylyltransferase (UTase) activity is inhibited by glutamine, while glutamine activates uridylyl-removing (UR) activity. Functionally, modifies, by uridylylation and deuridylylation, the PII regulatory proteins (GlnB and homologs), in response to the nitrogen status of the cell that GlnD senses through the glutamine level. Under low glutamine levels, catalyzes the conversion of the PII proteins and UTP to PII-UMP and PPi, while under higher glutamine levels, GlnD hydrolyzes PII-UMP to PII and UMP (deuridylylation). Thus, controls uridylylation state and activity of the PII proteins, and plays an important role in the regulation of nitrogen assimilation and metabolism. This is Bifunctional uridylyltransferase/uridylyl-removing enzyme from Aliivibrio fischeri (strain MJ11) (Vibrio fischeri).